Here is a 225-residue protein sequence, read N- to C-terminus: NAD(P)H-hydrate epimerase (225 aa).

The 201-residue stretch at methionine 9–phenylalanine 209 folds into the YjeF N-terminal domain. Asparagine 57 to aspartate 61 contacts (6S)-NADPHX. Positions 58 and 119 each coordinate K(+). (6S)-NADPHX contacts are provided by residues glycine 123–leucine 129 and aspartate 152. Threonine 155 serves as a coordination point for K(+).

It belongs to the NnrE/AIBP family. K(+) serves as cofactor.

It carries out the reaction (6R)-NADHX = (6S)-NADHX. It catalyses the reaction (6R)-NADPHX = (6S)-NADPHX. Catalyzes the epimerization of the S- and R-forms of NAD(P)HX, a damaged form of NAD(P)H that is a result of enzymatic or heat-dependent hydration. This is a prerequisite for the S-specific NAD(P)H-hydrate dehydratase to allow the repair of both epimers of NAD(P)HX. The protein is NAD(P)H-hydrate epimerase of Leuconostoc kimchii (strain IMSNU 11154 / KCTC 2386 / IH25).